The following is a 588-amino-acid chain: Adenine deaminase (588 aa).

It belongs to the metallo-dependent hydrolases superfamily. Adenine deaminase family. As to quaternary structure, homodimer. It depends on Mn(2+) as a cofactor.

It catalyses the reaction adenine + H2O + H(+) = hypoxanthine + NH4(+). This Escherichia coli (strain SMS-3-5 / SECEC) protein is Adenine deaminase.